The following is a 138-amino-acid chain: Putative nickel-responsive regulator (138 aa).

Ni(2+) is bound by residues His-78, His-89, His-91, and Cys-97.

It belongs to the transcriptional regulatory CopG/NikR family. Ni(2+) serves as cofactor.

In terms of biological role, transcriptional regulator. This is Putative nickel-responsive regulator from Pyrococcus furiosus (strain ATCC 43587 / DSM 3638 / JCM 8422 / Vc1).